Consider the following 102-residue polypeptide: Urease subunit beta (102 aa).

This sequence belongs to the urease beta subunit family. In terms of assembly, heterotrimer of UreA (gamma), UreB (beta) and UreC (alpha) subunits. Three heterotrimers associate to form the active enzyme.

The protein localises to the cytoplasm. The enzyme catalyses urea + 2 H2O + H(+) = hydrogencarbonate + 2 NH4(+). Its pathway is nitrogen metabolism; urea degradation; CO(2) and NH(3) from urea (urease route): step 1/1. This is Urease subunit beta from Blochmanniella pennsylvanica (strain BPEN).